A 614-amino-acid chain; its full sequence is MKRDRLGRFLSPGIARQRGGSGGGCGSGRTRGRPSRSGGTSADGAAAQLSWGSMTRSCGDTGDDGTDEAGAGRTLAMGHCRLCHGKFSSRSLRSISDRVPGETSERLSPGERVFIRDFQRLLGVAVHQDPALPQSVCKNCYTQFYQCHSLLRTFLQRVNVSPAGQRKPCTKVGVQPTTVAEEGACVADLIASSPRCLHGLVGWVHEHAVSCGSLPSLQRTLSSEYCGIIQAVWGCDQGHDFTMDTASSCRALFLDSALAVKWAWGKDLSPRLAQNSESNPTGAASRLCQARETQVGSETKTLPSVDVALLHSHGDSVGPGLGPCTQPHLAPSEAPGQLGETQVPSSTSDDRVKDEFSDLSEGDFLSEDESDKKQTPQSSDESFEPYPEKKVSGKKSEGREAKRPEEPKIRKKPGPKPGWKKKLRCEREELPTIYKCPYQGCTAVYRGADGMKKHIKEHHEEVRERPCPHPGCNKVFMIDRYLQRHVKLIHTEVRNYICDECGQTFKQRKHLLVHQMRHSGAKPLQCEVCGFQCRQRASLKYHMTKHKAETELDFACDQCGRRFEKAHNLNVHMSMVHPLTQAQDRALPLEAEPPPGPLSPSGTMEGQAVKPEPT.

A disordered region spans residues 1-46; the sequence is MKRDRLGRFLSPGIARQRGGSGGGCGSGRTRGRPSRSGGTSADGAA. Residues 19–29 are compositionally biased toward gly residues; sequence GGSGGGCGSGR. In terms of domain architecture, ZAD spans 78–164; the sequence is GHCRLCHGKF…LQRVNVSPAG (87 aa). Residues cysteine 80, cysteine 83, cysteine 137, and cysteine 140 each coordinate Zn(2+). A disordered region spans residues 271 to 422; it reads RLAQNSESNP…PGPKPGWKKK (152 aa). Polar residues-rich tracts occupy residues 272–282 and 291–302; these read LAQNSESNPTG and RETQVGSETKTL. A compositionally biased stretch (acidic residues) spans 357-369; that stretch reads SDLSEGDFLSEDE. Residues 386–408 are compositionally biased toward basic and acidic residues; the sequence is YPEKKVSGKKSEGREAKRPEEPK. Over residues 409–422 the composition is skewed to basic residues; it reads IRKKPGPKPGWKKK. 5 C2H2-type zinc fingers span residues 434 to 458, 465 to 490, 496 to 518, 524 to 546, and 554 to 577; these read YKCP…IKEH, RPCP…KLIH, YICD…QMRH, LQCE…MTKH, and FACD…SMVH. The segment at 588 to 614 is disordered; that stretch reads PLEAEPPPGPLSPSGTMEGQAVKPEPT.

Found in all the examined tissues, with highest levels in kidney, liver, lung, and spleen.

The protein localises to the nucleus. It localises to the chromosome. It is found in the centromere. The protein resides in the kinetochore. In terms of biological role, may be involved in transcriptional regulation. This is Zinc finger protein 276 (Znf276) from Mus musculus (Mouse).